The following is a 376-amino-acid chain: Uroporphyrinogen decarboxylase (376 aa).

Residues 29-33 (RQAGR), Asp-79, Tyr-155, Ser-210, and His-342 contribute to the substrate site.

It belongs to the uroporphyrinogen decarboxylase family. In terms of assembly, homodimer.

The protein localises to the cytoplasm. The catalysed reaction is uroporphyrinogen III + 4 H(+) = coproporphyrinogen III + 4 CO2. Its pathway is porphyrin-containing compound metabolism; protoporphyrin-IX biosynthesis; coproporphyrinogen-III from 5-aminolevulinate: step 4/4. In terms of biological role, catalyzes the decarboxylation of four acetate groups of uroporphyrinogen-III to yield coproporphyrinogen-III. The polypeptide is Uroporphyrinogen decarboxylase (Paracidovorax citrulli (strain AAC00-1) (Acidovorax citrulli)).